Consider the following 492-residue polypeptide: Aerolysin-3 (492 aa).

An N-terminal signal peptide occupies residues 1–23 (MKKLKITGLSLIISGLLMAQAQA). Disulfide bonds link Cys42-Cys98 and Cys182-Cys187. Residues 68–84 (WQISGLANGWVIMGPGY) are interaction with host N-linked glycan. A part of the transmembrane beta-barrel after proteolytic activation of the toxin and insertion into the host membrane region spans residues 256-288 (YGLSEKVTTKNKFKWPLVGETELSIEIAANQSW). An interaction with glycans from host GPI-anchor region spans residues 346–355 (RWGGNAWYTH). Positions 446 to 492 (AAASHSSRARNLSAGQGLRLEIPLDAQELSGLGFNNVSLSVTPAANQ) are excised as a propeptide.

This sequence belongs to the aerolysin family. As to quaternary structure, homodimer in solution; homoheptamer in the host membrane. After binding to GPI-anchored proteins in target membranes and proteolytic removal of the C-terminal propeptide, the protein assembles into a heptameric pre-pore complex. A further conformation change leads to insertion into the host membrane. Proteolytic cleavage and subsequent release of the propeptide trigger a major conformation change, leading to the formation of a heptameric pre-pore that then inserts into the host membrane.

The protein localises to the secreted. The protein resides in the host cell membrane. In terms of biological role, secreted, cytolytic toxin that forms pores in host membranes after proteolytic removal of a C-terminal propeptide, leading to destruction of the membrane permeability barrier and cell death. The pores are formed by transmembrane beta-strands and are approximately 3 nm in diameter. The polypeptide is Aerolysin-3 (ahh3) (Aeromonas hydrophila).